Here is a 401-residue protein sequence, read N- to C-terminus: Phosphoglycerate kinase, cytosolic (401 aa).

(2R)-3-phosphoglycerate-binding residues include Val24, Asp25, Asn27, Arg41, Ser63, His64, Gly66, Arg67, Arg122, His154, and Arg155. Gly200 contributes to the ADP binding site. Residue Gly200 participates in CDP binding. 2 residues coordinate AMP: Lys202 and Lys206. Lys206 provides a ligand contact to ATP. Residue Gly224 participates in ADP binding. Gly224 provides a ligand contact to CDP. Residues Gly225 and Gly297 each contribute to the AMP site. 2 residues coordinate ATP: Gly225 and Gly297. The CDP site is built by Gly322 and Phe327. Phe327 lines the ADP pocket. Position 328 (Glu328) interacts with AMP. Glu328, Asp359, and Ser360 together coordinate ATP. Asp359 serves as a coordination point for Mg(2+).

This sequence belongs to the phosphoglycerate kinase family. In terms of assembly, monomer. Mg(2+) serves as cofactor.

It localises to the cytoplasm. The catalysed reaction is (2R)-3-phosphoglycerate + ATP = (2R)-3-phospho-glyceroyl phosphate + ADP. Its pathway is carbohydrate degradation; glycolysis; pyruvate from D-glyceraldehyde 3-phosphate: step 2/5. The sequence is that of Phosphoglycerate kinase, cytosolic from Nicotiana tabacum (Common tobacco).